The sequence spans 154 residues: Ribonuclease HI (154 aa).

The 142-residue stretch at 1–142 (MPKQIEIFTD…CDELAKKGAE (142 aa)) folds into the RNase H type-1 domain. Positions 10, 48, 70, and 134 each coordinate Mg(2+).

The protein belongs to the RNase H family. As to quaternary structure, monomer. Mg(2+) is required as a cofactor.

Its subcellular location is the cytoplasm. It catalyses the reaction Endonucleolytic cleavage to 5'-phosphomonoester.. Functionally, endonuclease that specifically degrades the RNA of RNA-DNA hybrids. In Haemophilus influenzae (strain ATCC 51907 / DSM 11121 / KW20 / Rd), this protein is Ribonuclease HI (rnhA).